The following is a 426-amino-acid chain: tRNA(Ile)-lysidine synthase (426 aa).

Position 27 to 32 (Ser27 to Ser32) interacts with ATP.

The protein belongs to the tRNA(Ile)-lysidine synthase family.

It is found in the cytoplasm. The catalysed reaction is cytidine(34) in tRNA(Ile2) + L-lysine + ATP = lysidine(34) in tRNA(Ile2) + AMP + diphosphate + H(+). Ligates lysine onto the cytidine present at position 34 of the AUA codon-specific tRNA(Ile) that contains the anticodon CAU, in an ATP-dependent manner. Cytidine is converted to lysidine, thus changing the amino acid specificity of the tRNA from methionine to isoleucine. The sequence is that of tRNA(Ile)-lysidine synthase from Bacteroides thetaiotaomicron (strain ATCC 29148 / DSM 2079 / JCM 5827 / CCUG 10774 / NCTC 10582 / VPI-5482 / E50).